A 492-amino-acid chain; its full sequence is Phosphatidylinositol 4-kinase type 2-beta (492 aa).

Positions 1-11 (MEPKQTADARD) are enriched in basic and acidic residues. The tract at residues 1–98 (MEPKQTADAR…SDRENMSGGH (98 aa)) is disordered. In terms of domain architecture, PI3K/PI4K catalytic spans 127 to 462 (GVFPERISQG…VQMPRVVVER (336 aa)). Positions 133-139 (ISQGSSG) are G-loop. ATP-binding residues include serine 140 and lysine 155. Residues 160 to 162 (EPY) are important for substrate binding. The important for interaction with membranes stretch occupies residues 168 to 181 (KWTKYFHKICCPCC). Residues 264–267 (QLFV) and 278–279 (RK) each bind ATP. Residues 271–279 (KEADYWLRK) are important for interaction with membranes. Residues 308–316 (RNTDRGNDN) form a catalytic loop region. The activation loop stretch occupies residues 353-373 (AIDNGLAFPFKHPDEWRAYPF). Position 355 (aspartate 355) interacts with ATP. The interval 368–377 (WRAYPFHWAW) is important for interaction with membranes.

Belongs to the PI3/PI4-kinase family. Type II PI4K subfamily.

It localises to the cytoplasm. It is found in the cytosol. The protein resides in the golgi apparatus membrane. Its subcellular location is the endoplasmic reticulum membrane. The protein localises to the cell membrane. It localises to the early endosome membrane. The enzyme catalyses a 1,2-diacyl-sn-glycero-3-phospho-(1D-myo-inositol) + ATP = a 1,2-diacyl-sn-glycero-3-phospho-(1D-myo-inositol 4-phosphate) + ADP + H(+). Functionally, contributes to the overall PI4-kinase activity of the cell. This contribution may be especially significant in plasma membrane, endosomal and Golgi compartments. The phosphorylation of phosphatidylinositol (PI) to PI4P is the first committed step in the generation of phosphatidylinositol 4,5-bisphosphate (PIP2), a precursor of the second messenger inositol 1,4,5-trisphosphate (InsP3). The polypeptide is Phosphatidylinositol 4-kinase type 2-beta (pi4k2b) (Xenopus tropicalis (Western clawed frog)).